We begin with the raw amino-acid sequence, 256 residues long: POU domain class 2-associating factor 1 (256 aa).

Residues 1–24 (MLWQKSTAPEQAPAPPRPYQGVRV) are disordered. The region spanning 16–38 (PRPYQGVRVKEPVKELLRRKRGH) is the OCA domain.

This sequence belongs to the POU2AF family. As to quaternary structure, interacts with POU2F1/OCT1 and POU2F2/OCT2; the interaction increases POU2F1 and POU2F2 transactivation activity. Ubiquitinated; mediated by SIAH1 or SIAH2 and leading to its subsequent proteasomal degradation. B-cell specific.

Its subcellular location is the nucleus. Transcriptional coactivator that specifically associates with either POU2F1/OCT1 or POU2F2/OCT2. It boosts the POU2F1/OCT1 mediated promoter activity and to a lesser extent, that of POU2F2/OCT2. It recognizes the POU domains of POU2F1/OCT1 and POU2F2/OCT2. It is essential for the response of B-cells to antigens and required for the formation of germinal centers. Regulates IL6 expression in B cells as POU2F2/OCT2 coactivator. This is POU domain class 2-associating factor 1 from Mus musculus (Mouse).